We begin with the raw amino-acid sequence, 624 residues long: FAD-dependent monooxygenase apdD (624 aa).

FAD-binding residues include Glu73 and Asp359.

It belongs to the paxM FAD-dependent monooxygenase family. FAD serves as cofactor.

The protein operates within secondary metabolite biosynthesis. FAD-dependent monooxygenase; part of the gene cluster that mediates the biosynthesis of aspyridones. The polyketide-amino acid backbone preaspyridone A is first assembled by the PKS-NRPS hybrid apdA. The assembly of preaspyridone A is initiated by loading of malonyl-CoA onto apdA, followed by decarboxylation to yield the acetyl starter unit. The growing polyketide chain then elongates into a tetraketide. The adpA PKS module catalyzes three Claisen condensations, as well as beta-keto processing and methylation. Alpha-methylation step during polyketide synthesis is a prerequisite and a key checkpoint for chain transfer between PKS and NRPS modules. The downstream NRPS module contains the condensation (C), adenylation (A), and thiolation (T) domains and catalyzes the incorporation of tyrosine via the formation of the L-tyrosinyl-thioester and the amide linkage between L-tyrosinyl-thioester and the tetraketide. The bimodular assembly line is terminated with a reductase (R) domain that facilitates formation and release of the tetramic acid product. Because apdA lacks a designated enoylreductase (ER) domain, the required activity is provided the enoyl reductase apdC. ApdC appears to operate with different stereoselectivity in different PKS cycle. Combined with apdC, apdA is proposed to synthesize preaspyridone A via about 20 enzymatic steps. A number of oxidative steps performed successively by the cytochrome P450 monooxygenases apdE and apdB are required for the conversion of preaspyridone A to aspyridone A. The cytochrome P450 monooxygenase apdE is responsible for the oxidative dephenylation of preaspyridone A. Finally, the predicted FAD-dependent monooxygenase apdD and the acyl-CoA dehydrogenase apdG may be involved in the transformation of aspyridone A into aspyridone B. The polypeptide is FAD-dependent monooxygenase apdD (Emericella nidulans (strain FGSC A4 / ATCC 38163 / CBS 112.46 / NRRL 194 / M139) (Aspergillus nidulans)).